Here is a 457-residue protein sequence, read N- to C-terminus: Siroheme synthase (457 aa).

The segment at 1–204 (MDHLPIFCQL…NDQKAITETT (204 aa)) is precorrin-2 dehydrogenase /sirohydrochlorin ferrochelatase. NAD(+) contacts are provided by residues 22–23 (DV) and 43–44 (LA). Position 128 is a phosphoserine (serine 128). Positions 216–457 (GEVVLVGAGP…RDKLNWFSNH (242 aa)) are uroporphyrinogen-III C-methyltransferase. Proline 225 is an S-adenosyl-L-methionine binding site. Aspartate 248 serves as the catalytic Proton acceptor. The active-site Proton donor is the lysine 270. S-adenosyl-L-methionine contacts are provided by residues 301–303 (GGD), isoleucine 306, 331–332 (TA), methionine 382, and glycine 411.

In the N-terminal section; belongs to the precorrin-2 dehydrogenase / sirohydrochlorin ferrochelatase family. This sequence in the C-terminal section; belongs to the precorrin methyltransferase family.

The catalysed reaction is uroporphyrinogen III + 2 S-adenosyl-L-methionine = precorrin-2 + 2 S-adenosyl-L-homocysteine + H(+). It catalyses the reaction precorrin-2 + NAD(+) = sirohydrochlorin + NADH + 2 H(+). It carries out the reaction siroheme + 2 H(+) = sirohydrochlorin + Fe(2+). Its pathway is cofactor biosynthesis; adenosylcobalamin biosynthesis; precorrin-2 from uroporphyrinogen III: step 1/1. The protein operates within cofactor biosynthesis; adenosylcobalamin biosynthesis; sirohydrochlorin from precorrin-2: step 1/1. It participates in porphyrin-containing compound metabolism; siroheme biosynthesis; precorrin-2 from uroporphyrinogen III: step 1/1. It functions in the pathway porphyrin-containing compound metabolism; siroheme biosynthesis; siroheme from sirohydrochlorin: step 1/1. Its pathway is porphyrin-containing compound metabolism; siroheme biosynthesis; sirohydrochlorin from precorrin-2: step 1/1. Multifunctional enzyme that catalyzes the SAM-dependent methylations of uroporphyrinogen III at position C-2 and C-7 to form precorrin-2 via precorrin-1. Then it catalyzes the NAD-dependent ring dehydrogenation of precorrin-2 to yield sirohydrochlorin. Finally, it catalyzes the ferrochelation of sirohydrochlorin to yield siroheme. The chain is Siroheme synthase from Shigella dysenteriae serotype 1 (strain Sd197).